Here is a 215-residue protein sequence, read N- to C-terminus: Cytochrome b6 (215 aa).

The helical transmembrane segment at 32-52 (IFYCLGGITLTCFLVQIATGF) threads the bilayer. A heme c-binding site is contributed by Cys35. Heme b-binding residues include His86 and His100. Transmembrane regions (helical) follow at residues 90–110 (ASMM…TGGF), 116–136 (LTWV…VTGY), and 186–206 (LHTF…FLMI). Residues His187 and His202 each coordinate heme b.

The protein belongs to the cytochrome b family. PetB subfamily. In terms of assembly, the 4 large subunits of the cytochrome b6-f complex are cytochrome b6, subunit IV (17 kDa polypeptide, PetD), cytochrome f and the Rieske protein, while the 4 small subunits are PetG, PetL, PetM and PetN. The complex functions as a dimer. Heme b is required as a cofactor. Requires heme c as cofactor.

Its subcellular location is the plastid. It localises to the chloroplast thylakoid membrane. In terms of biological role, component of the cytochrome b6-f complex, which mediates electron transfer between photosystem II (PSII) and photosystem I (PSI), cyclic electron flow around PSI, and state transitions. In Adiantum capillus-veneris (Maidenhair fern), this protein is Cytochrome b6.